Consider the following 233-residue polypeptide: Ribosomal RNA-processing protein 14-C (233 aa).

Residues 32-65 (DRALLLQRRKEKAKARAEAKKLAKKESKAKQESK) adopt a coiled-coil conformation. A compositionally biased stretch (basic and acidic residues) spans 47 to 64 (RAEAKKLAKKESKAKQES). 3 disordered regions span residues 47–87 (RAEA…DNHK), 130–149 (KRRIESMDEEKRRKIEESDK), and 164–233 (DNEQ…SKKK). A Phosphoserine modification is found at Ser75. Residues 122-223 (ALKHLEAKKR…ESKKSKKGKA (102 aa)) adopt a coiled-coil conformation. 2 stretches are compositionally biased toward basic and acidic residues: residues 133-149 (IESMDEEKRRKIEESDK) and 180-209 (KKKSSDAWKERKDNEKKAMLMRQQRREENL). Residues 210–233 (KKRRESKKSKKGKAPKKKKPSKKK) are compositionally biased toward basic residues.

It belongs to the SURF6 family. As to quaternary structure, component of the 90S and 60S pre-ribosomal particles.

It is found in the nucleus. It localises to the nucleolus. Its function is as follows. Involved in ribosome biogenesis and cell polarity. Required for the synthesis of both 40S and 60S ribosomal subunits and may also play some direct role in correct positioning of the mitotic spindle during mitosis. In Schizosaccharomyces pombe (strain 972 / ATCC 24843) (Fission yeast), this protein is Ribosomal RNA-processing protein 14-C (rrp14c).